An 882-amino-acid polypeptide reads, in one-letter code: Liprin-beta-2 (882 aa).

The stretch at 101-303 (AASNETYQER…DKDRRIEELT (203 aa)) forms a coiled coil. A phosphoserine mark is found at Ser-328, Ser-362, and Ser-386. The disordered stretch occupies residues 339–554 (RKWNTTNKSP…SRTRDTKGQK (216 aa)). Basic and acidic residues predominate over residues 388–399 (EDLRRESGDKCV). Composition is skewed to polar residues over residues 442–457 (PTASLQPDSSGSSQPK) and 481–495 (SSASSGTESSPQSPV). Ser-502 and Ser-518 each carry phosphoserine. Basic residues predominate over residues 502–515 (SPKGIKKFWGKIRR). SAM domains follow at residues 564 to 628 (WSTE…INAK), 636 to 699 (LDHI…LHVN), and 724 to 789 (WSNH…KFNA).

It belongs to the liprin family. Liprin-beta subfamily. As to quaternary structure, forms homodimers and heterodimers. In terms of tissue distribution, expressed widely. Strong expression in liver, kidney, intestine, heart, lung and testis. Low expression in brain and thymus.

In terms of biological role, may regulate the disassembly of focal adhesions. Did not bind receptor-like tyrosine phosphatases type 2A. This is Liprin-beta-2 (Ppfibp2) from Mus musculus (Mouse).